A 275-amino-acid polypeptide reads, in one-letter code: Phosphonoacetaldehyde hydrolase (275 aa).

Asp15 acts as the Nucleophile in catalysis. Residues Asp15 and Ala17 each coordinate Mg(2+). Residue Lys56 is the Schiff-base intermediate with substrate of the active site. Mg(2+) is bound at residue Asp189.

This sequence belongs to the HAD-like hydrolase superfamily. PhnX family. As to quaternary structure, homodimer. Requires Mg(2+) as cofactor.

The catalysed reaction is phosphonoacetaldehyde + H2O = acetaldehyde + phosphate + H(+). In terms of biological role, involved in phosphonate degradation. This chain is Phosphonoacetaldehyde hydrolase, found in Pseudomonas putida (strain W619).